The primary structure comprises 579 residues: Maintenance of mitochondrial morphology protein 1 (579 aa).

The Lumenal segment spans residues 1–43 (MQQPQQQDLQIGLPYAPVQPPIPSPAAYFAYLPSPSRWTFTQG). Residues 44–64 (LIVGQVSMVIVALLLIRYVIF) form a helical membrane-spanning segment. Residues 65–579 (EDSATALEKE…GLRNRPGFVQ (515 aa)) lie on the Cytoplasmic side of the membrane. An SMP-LTD domain is found at 150-391 (LPESADWLNV…WPRYWSLTLP (242 aa)). Disordered regions lie at residues 309-332 (VLPT…RSRH), 460-479 (RPSL…SGLR), and 558-579 (SSVL…GFVQ). 2 stretches are compositionally biased toward low complexity: residues 311–328 (PTAN…ATPP) and 465–476 (SSRPPHVRSSSS).

Belongs to the MMM1 family. In terms of assembly, homodimer. Component of the ER-mitochondria encounter structure (ERMES) or MDM complex, composed of MMM1, MDM10, MDM12 and MDM34. An MMM1 homodimer associates with one molecule of MDM12 on each side in a pairwise head-to-tail manner, and the SMP-LTD domains of MMM1 and MDM12 generate a continuous hydrophobic tunnel for phospholipid trafficking.

The protein localises to the endoplasmic reticulum membrane. In terms of biological role, component of the ERMES/MDM complex, which serves as a molecular tether to connect the endoplasmic reticulum (ER) and mitochondria. Components of this complex are involved in the control of mitochondrial shape and protein biogenesis, and function in nonvesicular lipid trafficking between the ER and mitochondria. The MDM12-MMM1 subcomplex functions in the major beta-barrel assembly pathway that is responsible for biogenesis of all outer membrane beta-barrel proteins, and acts in a late step after the SAM complex. The MDM10-MDM12-MMM1 subcomplex further acts in the TOM40-specific pathway after the action of the MDM12-MMM1 complex. Essential for establishing and maintaining the structure of mitochondria and maintenance of mtDNA nucleoids. The chain is Maintenance of mitochondrial morphology protein 1 from Mycosarcoma maydis (Corn smut fungus).